We begin with the raw amino-acid sequence, 159 residues long: SsrA-binding protein (159 aa).

It belongs to the SmpB family.

Its subcellular location is the cytoplasm. Required for rescue of stalled ribosomes mediated by trans-translation. Binds to transfer-messenger RNA (tmRNA), required for stable association of tmRNA with ribosomes. tmRNA and SmpB together mimic tRNA shape, replacing the anticodon stem-loop with SmpB. tmRNA is encoded by the ssrA gene; the 2 termini fold to resemble tRNA(Ala) and it encodes a 'tag peptide', a short internal open reading frame. During trans-translation Ala-aminoacylated tmRNA acts like a tRNA, entering the A-site of stalled ribosomes, displacing the stalled mRNA. The ribosome then switches to translate the ORF on the tmRNA; the nascent peptide is terminated with the 'tag peptide' encoded by the tmRNA and targeted for degradation. The ribosome is freed to recommence translation, which seems to be the essential function of trans-translation. This is SsrA-binding protein from Acidothermus cellulolyticus (strain ATCC 43068 / DSM 8971 / 11B).